Here is a 647-residue protein sequence, read N- to C-terminus: Cartilage acidic protein 1 (647 aa).

The signal sequence occupies residues 1–30 (MMLPADFFVPVSKMMLLALLLSIIICCGGA). The stretch at 48–90 (DYDSNPTQLNYGVAITDVDNDGDFEVVVAGYNGPNLVLKYIKE) is one FG-GAP 1; atypical repeat. One copy of the FG-GAP 2; atypical repeat lies at 107–149 (YALRDRQGNAIGVAACDIDGDGREEIYFLNTNNAFSGIATYSD). Residues 285 to 335 (TGVDDVYQHGRGVALADFNRDGKVDIVYGNWNGPHRLFLQMNTNGKVRFRD) form an FG-GAP 3; atypical repeat. An FG-GAP 4; atypical repeat occupies 397 to 439 (GDASEPDGRGTGGAVTDFDGDGMLDLILSHGESMAQPLSVFKG). The EGF-like domain occupies 561–607 (DTDECIQFPFVCPREKPVCINTYGGYKCRPNRRCSRGFEPNEDGTAC). Cystine bridges form between cysteine 565–cysteine 579, cysteine 572–cysteine 588, and cysteine 594–cysteine 607.

It localises to the secreted. Its subcellular location is the extracellular space. It is found in the extracellular matrix. This Xenopus tropicalis (Western clawed frog) protein is Cartilage acidic protein 1 (crtac1).